The chain runs to 359 residues: Methyltransferase fsa4 (359 aa).

S-adenosyl-L-methionine contacts are provided by residues 198–199 (GG), D224, 248–249 (SF), R264, and R265.

This sequence belongs to the class I-like SAM-binding methyltransferase superfamily. Cation-independent O-methyltransferase family.

It functions in the pathway mycotoxin biosynthesis. Its function is as follows. Methyltransferase; part of the gene cluster that mediates the biosynthesis of HIV-1 integrase inhibitor equisetin and of fusarisetin A, both trans-fused decalin-containing tetramic acids showing also antimicrobial activity. The PKS module of fsa1 together with the enoylreductase fsa3 catalyze the formation of the polyketide unit which is then conjugated to L-serine by the condensation domain of the fsa1 NRPS module. Activity of the Dieckmann cyclase domain (RED) results in release of the Dieckmann product intermediate. Diels-Alderase fsa2 is involved in endo-selective Diels-Alder cycloaddition to form the decalin ring, leading to the production of N-desmethylequisetin also called trichosetin. Subsequent N-methylation is carried out by fsa4 to give equisetin. The enzymatic gene responsible for the conversion of equisetin to fusarisetin A has not been identified yet and is probably located outside of the fsa cluster. This chain is Methyltransferase fsa4, found in Fusarium sp. (strain FN080326).